A 479-amino-acid polypeptide reads, in one-letter code: Probable cytosol aminopeptidase (479 aa).

The Mn(2+) site is built by lysine 247 and aspartate 252. Residue lysine 259 is part of the active site. Mn(2+) is bound by residues aspartate 270, aspartate 329, and glutamate 331. Residue arginine 333 is part of the active site.

This sequence belongs to the peptidase M17 family. The cofactor is Mn(2+).

It localises to the cytoplasm. The catalysed reaction is Release of an N-terminal amino acid, Xaa-|-Yaa-, in which Xaa is preferably Leu, but may be other amino acids including Pro although not Arg or Lys, and Yaa may be Pro. Amino acid amides and methyl esters are also readily hydrolyzed, but rates on arylamides are exceedingly low.. It carries out the reaction Release of an N-terminal amino acid, preferentially leucine, but not glutamic or aspartic acids.. Its function is as follows. Presumably involved in the processing and regular turnover of intracellular proteins. Catalyzes the removal of unsubstituted N-terminal amino acids from various peptides. The polypeptide is Probable cytosol aminopeptidase (Vesicomyosocius okutanii subsp. Calyptogena okutanii (strain HA)).